The following is a 449-amino-acid chain: Elongation factor 1-alpha (449 aa).

Residues K5–S230 enclose the tr-type G domain. Residues G14–S21 form a G1 region. Residue G14–S21 coordinates GTP. The G2 stretch occupies residues G70–D74. Positions D91–G94 are G3. GTP-binding positions include D91–H95 and N153–D156. Residues N153–D156 are G4. The tract at residues S194–W196 is G5. Residue E362 is modified to 5-glutamyl glycerylphosphorylethanolamine.

It belongs to the TRAFAC class translation factor GTPase superfamily. Classic translation factor GTPase family. EF-Tu/EF-1A subfamily. In terms of processing, phosphatidylethanolamine (PE) is a direct precursor of the ethanolamine-phosphoglycerol (EPG) moiety.

The protein resides in the cytoplasm. In terms of biological role, this protein promotes the GTP-dependent binding of aminoacyl-tRNA to the A-site of ribosomes during protein biosynthesis. The protein is Elongation factor 1-alpha (TEF1) of Trypanosoma brucei brucei.